The sequence spans 277 residues: Caspase-3 (277 aa).

At Met1 the chain carries N-acetylmethionine. 2 consecutive propeptides follow at residues 1–9 and 10–28; these read MENNKTSVD and SKSI…KSMD. The residue at position 11 (Lys11) is an N6-acetyllysine. Ser26 is modified (phosphoserine). Residues His121 and Cys163 contribute to the active site. Cys163 bears the S-nitrosocysteine; in inhibited form mark.

This sequence belongs to the peptidase C14A family. Heterotetramer that consists of two anti-parallel arranged heterodimers, each one formed by a 17 kDa (p17) and a 12 kDa (p12) subunit. Interacts with BIRC6/bruce. In terms of assembly, (Microbial infection) Subunit p17 interacts with African swine fever virus (ASFV) inhibitor of apoptosis protein. In terms of processing, cleavage by granzyme B, caspase-6, caspase-8 and caspase-10 generates the two active subunits. Additional processing of the propeptides is likely due to the autocatalytic activity of the activated protease. Active heterodimers between the small subunit of caspase-7 protease and the large subunit of caspase-3 also occur and vice versa. S-nitrosylated on its catalytic site cysteine in unstimulated cell lines and denitrosylated upon activation of the Fas apoptotic pathway, associated with an increase in intracellular caspase activity. Fas therefore activates caspase-3 not only by inducing the cleavage of the caspase zymogen to its active subunits, but also by stimulating the denitrosylation of its active site thiol. Post-translationally, ubiquitinated by BIRC6; this activity is inhibited by DIABLO/SMAC.

It is found in the cytoplasm. The enzyme catalyses Strict requirement for an Asp residue at positions P1 and P4. It has a preferred cleavage sequence of Asp-Xaa-Xaa-Asp-|- with a hydrophobic amino-acid residue at P2 and a hydrophilic amino-acid residue at P3, although Val or Ala are also accepted at this position.. Its activity is regulated as follows. Inhibited by BIRC6; following inhibition of BIRC6-caspase binding by DIABLO/SMAC, BIRC6 is subjected to caspase cleavage, leading to an increase in active caspases. Involved in the activation cascade of caspases responsible for apoptosis execution. At the onset of apoptosis, it proteolytically cleaves poly(ADP-ribose) polymerase PARP1 at a '216-Asp-|-Gly-217' bond. Cleaves and activates sterol regulatory element binding proteins (SREBPs) between the basic helix-loop-helix leucine zipper domain and the membrane attachment domain. Cleaves and activates caspase-6, -7 and -9 (CASP6, CASP7 and CASP9, respectively). Cleaves and inactivates interleukin-18 (IL18). Triggers cell adhesion in sympathetic neurons through RET cleavage. Cleaves IL-1 beta between an Asp and an Ala, releasing the mature cytokine which is involved in a variety of inflammatory processes. Cleaves and inhibits serine/threonine-protein kinase AKT1 in response to oxidative stress. Acts as an inhibitor of type I interferon production during virus-induced apoptosis by mediating cleavage of antiviral proteins CGAS, IRF3 and MAVS, thereby preventing cytokine overproduction. Also involved in pyroptosis by mediating cleavage and activation of gasdermin-E (GSDME). Cleaves XRCC4 and phospholipid scramblase proteins XKR4, XKR8 and XKR9, leading to promote phosphatidylserine exposure on apoptotic cell surface. Cleaves BIRC6 following inhibition of BIRC6-caspase binding by DIABLO/SMAC. The chain is Caspase-3 (CASP3) from Sus scrofa (Pig).